Consider the following 290-residue polypeptide: Fructose-bisphosphate aldolase (290 aa).

Ser-51 lines the D-glyceraldehyde 3-phosphate pocket. Asp-86 (proton donor) is an active-site residue. Positions 87, 107, 137, and 179 each coordinate Zn(2+). Position 180 (Gly-180) interacts with dihydroxyacetone phosphate. His-208 provides a ligand contact to Zn(2+). Residues 209–211 (GGS) and 230–233 (NINT) contribute to the dihydroxyacetone phosphate site.

It belongs to the class II fructose-bisphosphate aldolase family. Homodimer. Zn(2+) serves as cofactor.

The enzyme catalyses beta-D-fructose 1,6-bisphosphate = D-glyceraldehyde 3-phosphate + dihydroxyacetone phosphate. Its pathway is carbohydrate degradation; glycolysis; D-glyceraldehyde 3-phosphate and glycerone phosphate from D-glucose: step 4/4. Catalyzes the aldol condensation of dihydroxyacetone phosphate (DHAP or glycerone-phosphate) with glyceraldehyde 3-phosphate (G3P) to form fructose 1,6-bisphosphate (FBP) in gluconeogenesis and the reverse reaction in glycolysis. This is Fructose-bisphosphate aldolase (fba) from Ureaplasma parvum serovar 3 (strain ATCC 700970).